Reading from the N-terminus, the 141-residue chain is HTH-type transcriptional repressor NsrR (141 aa).

The 128-residue stretch at 2 to 129 (QLTSFTDYGL…DSHTLADMVE (128 aa)) folds into the HTH rrf2-type domain. A DNA-binding region (H-T-H motif) is located at residues 28-51 (ISEVTEVYGVSRNHMVKIINQLSR). 3 residues coordinate [2Fe-2S] cluster: Cys-91, Cys-96, and Cys-102.

It depends on [2Fe-2S] cluster as a cofactor.

Its function is as follows. Nitric oxide-sensitive repressor of genes involved in protecting the cell against nitrosative stress. May require iron for activity. This chain is HTH-type transcriptional repressor NsrR, found in Serratia proteamaculans (strain 568).